The chain runs to 506 residues: Apolipoprotein N-acyltransferase (506 aa).

A run of 7 helical transmembrane segments spans residues 10–30 (ANAK…AGWG), 33–53 (LALP…PLWW), 57–77 (VLAP…FYGS), 105–125 (IWLC…LLMA), 139–159 (WGVT…LWWI), 176–196 (LAGP…VTLS), and 205–225 (VGLA…SVRV). In terms of domain architecture, CN hydrolase spans 238 to 473 (IQGNIPTREK…FVIYAATIFR (236 aa)). The Proton acceptor role is filled by glutamate 279. Lysine 336 is a catalytic residue. The active-site Nucleophile is the cysteine 385. The helical transmembrane segment at 483 to 500 (YGDWLLPLLLGMLSLSVL) threads the bilayer.

It belongs to the CN hydrolase family. Apolipoprotein N-acyltransferase subfamily.

It localises to the cell inner membrane. The catalysed reaction is N-terminal S-1,2-diacyl-sn-glyceryl-L-cysteinyl-[lipoprotein] + a glycerophospholipid = N-acyl-S-1,2-diacyl-sn-glyceryl-L-cysteinyl-[lipoprotein] + a 2-acyl-sn-glycero-3-phospholipid + H(+). Its pathway is protein modification; lipoprotein biosynthesis (N-acyl transfer). Its function is as follows. Catalyzes the phospholipid dependent N-acylation of the N-terminal cysteine of apolipoprotein, the last step in lipoprotein maturation. This is Apolipoprotein N-acyltransferase from Thermosynechococcus vestitus (strain NIES-2133 / IAM M-273 / BP-1).